Here is a 585-residue protein sequence, read N- to C-terminus: Protein FAM151A (585 aa).

The helical transmembrane segment at 14-34 threads the bilayer; the sequence is WVFASITCVSAVAIAAIVLAI.

Belongs to the menorin family.

The protein resides in the membrane. This Pongo abelii (Sumatran orangutan) protein is Protein FAM151A (FAM151A).